The chain runs to 376 residues: Putative glutamate--cysteine ligase 2-3 (376 aa).

Belongs to the glutamate--cysteine ligase type 2 family. YbdK subfamily.

The enzyme catalyses L-cysteine + L-glutamate + ATP = gamma-L-glutamyl-L-cysteine + ADP + phosphate + H(+). In terms of biological role, ATP-dependent carboxylate-amine ligase which exhibits weak glutamate--cysteine ligase activity. The sequence is that of Putative glutamate--cysteine ligase 2-3 from Nocardioides sp. (strain ATCC BAA-499 / JS614).